We begin with the raw amino-acid sequence, 718 residues long: MFNKVTKTFQYGQHTVVLETGEIARQASGAVLVSVEDTVVLATVVAAKKAKPGQDFFPLTVDYIEKTYAAGRIPGGFFKREGKPSEKETLTSRLIDRPLRPLFPEGFYNEVQVVIHTLSVNPEIDPDIPAMIGASAALAISGIPFNGPIGAARVAYVEGQYLLNPTASQLKSSKMDLVVAGTENAVLMVESEAQQLSEEIMLGGVVFGHEQMQAAINAIHDLVRDAGKPEWTWSPAAKNEALIAAVTAAAQEGLSAAYQIREKQARTTKLREVYAEVSAKLAEQAAAAGQDAPDGVTVDNILFDLEARLVRSQILNGEPRIDGRDTRTVRPISVRLGVLPRAHGSALFTRGETQALVVATLGTKQDEQIIDALMGEYRDRFMLHYNMPPFATGETGRIGVPKRREIGHGRLAKRSLVPVLPKPEDFQYTIRIVSEITESNGSSSMASVCGGSLAMMDAGVPITDHVAGVAMGLILENGKFAVLTDILGDEDHLGDMDFKVAGTENGITALQMDIKIQGITKEIMQVALAQAREGRLHILGKMRESLDGSRTELSAFAPRMLTIKINPEKIRDVIGKGGATIRALTEETGTQIDISDDGTIVIASVDEGQAKEAQRRIVELTADVEVGQVYDGSVLRLLDFGAIVQVLPGRDGLLHISEIANYRIANINDVLKVGQQVRVKVIEADEKGRLRLSVKAIGGIEQQQAAADVPAQAETPAE.

Mg(2+)-binding residues include Asp-491 and Asp-497. The KH domain maps to Pro-558–Ile-617. Residues Gly-627 to Lys-695 form the S1 motif domain.

The protein belongs to the polyribonucleotide nucleotidyltransferase family. Mg(2+) is required as a cofactor.

The protein localises to the cytoplasm. The enzyme catalyses RNA(n+1) + phosphate = RNA(n) + a ribonucleoside 5'-diphosphate. Involved in mRNA degradation. Catalyzes the phosphorolysis of single-stranded polyribonucleotides processively in the 3'- to 5'-direction. This is Polyribonucleotide nucleotidyltransferase from Bordetella avium (strain 197N).